The following is a 239-amino-acid chain: Uridylate kinase (239 aa).

An ATP-binding site is contributed by 13–16 (KLSG). Gly-55 is a UMP binding site. ATP is bound by residues Gly-56 and Arg-60. UMP contacts are provided by residues Asp-75 and 136-143 (TGNPFFTT). Residues Thr-163, Asn-164, Tyr-169, and Asp-172 each coordinate ATP.

The protein belongs to the UMP kinase family. Homohexamer.

It is found in the cytoplasm. The enzyme catalyses UMP + ATP = UDP + ADP. Its pathway is pyrimidine metabolism; CTP biosynthesis via de novo pathway; UDP from UMP (UMPK route): step 1/1. Inhibited by UTP. In terms of biological role, catalyzes the reversible phosphorylation of UMP to UDP. This is Uridylate kinase from Neisseria meningitidis serogroup A / serotype 4A (strain DSM 15465 / Z2491).